The chain runs to 266 residues: Mitochondrial intermembrane space import and assembly protein 40 (266 aa).

A mitochondrion-targeting transit peptide spans 1 to 28 (MFRQVSVRALRRAAGRSVCASRAQMVRH). Topologically, residues 29–44 (SSTLGGGKGSYNLDMP) are mitochondrial matrix. Residues 45–61 (ALALAAGVTLLAGYMVY) form a helical; Signal-anchor for type II membrane protein membrane-spanning segment. At 62-266 (PRAPKAKQAA…AESAKSDEGH (205 aa)) the chain is on the mitochondrial intermembrane side. Over residues 87 to 98 (ASLQASAPVQAT) the composition is skewed to polar residues. Residues 87 to 180 (ASLQASAPVQ…GQQGAYNPDT (94 aa)) are disordered. 2 stretches are compositionally biased toward low complexity: residues 130-157 (AEVG…AAEA) and 165-175 (AGEAAQGQQGA). 3 disulfide bridges follow: cysteine 187–cysteine 189, cysteine 198–cysteine 231, and cysteine 208–cysteine 221. The CHCH domain maps to 195–239 (HGPCGEEFKAAFACFVYSEAEPKGIDCVEKFQVMQDCFRQHPEHY). 2 short sequence motifs (cx9C motif) span residues 198-208 (CGEEFKAAFAC) and 221-231 (CVEKFQVMQDC). The tract at residues 242–266 (QLESEEQAVRETEAAAESAKSDEGH) is disordered. Basic and acidic residues predominate over residues 248–266 (QAVRETEAAAESAKSDEGH).

Monomer. The cofactor is Cu(2+). It depends on Zn(2+) as a cofactor.

Its subcellular location is the mitochondrion inner membrane. Its function is as follows. Required for the import and folding of small cysteine-containing proteins (small Tim) in the mitochondrial intermembrane space (IMS). Forms a redox cycle with ERV1 that involves a disulfide relay system. Precursor proteins to be imported into the IMS are translocated in their reduced form into the mitochondria. The oxidized form of MIA40 forms a transient intermolecular disulfide bridge with the reduced precursor protein, resulting in oxidation of the precursor protein that now contains an intramolecular disulfide bond and is able to undergo folding in the IMS. This chain is Mitochondrial intermembrane space import and assembly protein 40 (MIA40), found in Eremothecium gossypii (strain ATCC 10895 / CBS 109.51 / FGSC 9923 / NRRL Y-1056) (Yeast).